Here is an 851-residue protein sequence, read N- to C-terminus: Envelope glycoprotein gp160 (851 aa).

The first 31 residues, 1-31, serve as a signal peptide directing secretion; it reads MKVMGIQRNCQQWWIWGILGFWMLMICNGMG. Residues 32-672 are Extracellular-facing; it reads NLWVTVYYGV…ITNWLWYIKI (641 aa). A disulfide bridge connects residues Cys-53 and Cys-73. Asn-87, Asn-135, Asn-141, Asn-153, Asn-157, Asn-183, and Asn-194 each carry an N-linked (GlcNAc...) asparagine; by host glycan. Intrachain disulfides connect Cys-118–Cys-202, Cys-125–Cys-193, Cys-130–Cys-154, Cys-215–Cys-244, and Cys-225–Cys-236. A V1 region spans residues 130–153; sequence CNAIKNNTKVTNNSINSANDEMKN. Residues 154 to 193 are V2; sequence CSFNITTELRDKKRKAYALFYKLDIVPLNNGSTDYRLINC. N-linked (GlcNAc...) asparagine; by host glycans are attached at residues Asn-238, Asn-259, Asn-273, Asn-286, Asn-298, Asn-328, Asn-335, and Asn-351. The interval 293 to 326 is V3; sequence CTRPSNNTRESIRIGPGQTFYATGDIIGDIRQAH. An intrachain disulfide couples Cys-293 to Cys-327. Positions 359–369 are CD4-binding loop; that stretch reads SSGGDLEITTH. 2 disulfides stabilise this stretch: Cys-373-Cys-433 and Cys-380-Cys-406. Positions 380–406 are V4; sequence CNTSNLFNSTKLELFNSSTNLNITLQC. N-linked (GlcNAc...) asparagine; by host glycans are attached at residues Asn-381, Asn-387, Asn-395, Asn-401, and Asn-436. V5 regions lie at residues 449 to 460 and 451 to 460; these read EPHSTKEIFRPE and HSTKEIFRPE. The interval 501-520 is fusion peptide; that stretch reads AALGALFLGFLGAAGSTMGA. The interval 562–580 is immunosuppression; the sequence is KQLQTRVLAIERHLRDQQL. Cys-586 and Cys-592 are disulfide-bonded. Residues Asn-599, Asn-604, Asn-613, Asn-625, and Asn-662 are each glycosylated (N-linked (GlcNAc...) asparagine; by host). Residues 621-655 adopt a coiled-coil conformation; it reads REISNYTDIIYNLLEVSQNQQDKNEKDLLALDKWE. The MPER; binding to GalCer stretch occupies residues 650 to 671; sequence ALDKWENLWNWFNITNWLWYIK. A helical membrane pass occupies residues 673–693; sequence FIMIVGGVIGLRIIFAVLSIV. Over 694–851 the chain is Cytoplasmic; that stretch reads NRVRQGYSPL…IRQGLEAALQ (158 aa). Positions 700–703 match the YXXL motif; contains endocytosis signal motif; that stretch reads YSPL. Cys-752 carries S-palmitoyl cysteine; by host lipidation.

Belongs to the HIV-1 env protein family. The mature envelope protein (Env) consists of a homotrimer of non-covalently associated gp120-gp41 heterodimers. The resulting complex protrudes from the virus surface as a spike. There seems to be as few as 10 spikes on the average virion. Interacts with host CD4, CCR5 and CXCR4. Gp120 also interacts with the C-type lectins CD209/DC-SIGN and CLEC4M/DC-SIGNR (collectively referred to as DC-SIGN(R)). Gp120 and gp41 interact with GalCer. Gp120 interacts with host ITGA4/ITGB7 complex; on CD4+ T-cells, this interaction results in rapid activation of integrin ITGAL/LFA-1, which facilitates efficient cell-to-cell spreading of HIV-1. Gp120 interacts with cell-associated heparan sulfate; this interaction increases virus infectivity on permissive cells and may be involved in infection of CD4- cells. As to quaternary structure, the mature envelope protein (Env) consists of a homotrimer of non-covalently associated gp120-gp41 heterodimers. The resulting complex protrudes from the virus surface as a spike. There seems to be as few as 10 spikes on the average virion. In terms of processing, highly glycosylated by host. The high number of glycan on the protein is reffered to as 'glycan shield' because it contributes to hide protein sequence from adaptive immune system. Palmitoylation of the transmembrane protein and of Env polyprotein (prior to its proteolytic cleavage) is essential for their association with host cell membrane lipid rafts. Palmitoylation is therefore required for envelope trafficking to classical lipid rafts, but not for viral replication. Post-translationally, specific enzymatic cleavages in vivo yield mature proteins. Envelope glycoproteins are synthesized as an inactive precursor that is heavily N-glycosylated and processed likely by host cell furin in the Golgi to yield the mature SU and TM proteins. The cleavage site between SU and TM requires the minimal sequence [KR]-X-[KR]-R. About 2 of the 9 disulfide bonds of gp41 are reduced by P4HB/PDI, following binding to CD4 receptor.

The protein localises to the virion membrane. Its subcellular location is the host cell membrane. It localises to the host endosome membrane. Functionally, oligomerizes in the host endoplasmic reticulum into predominantly trimers. In a second time, gp160 transits in the host Golgi, where glycosylation is completed. The precursor is then proteolytically cleaved in the trans-Golgi and thereby activated by cellular furin or furin-like proteases to produce gp120 and gp41. In terms of biological role, attaches the virus to the host lymphoid cell by binding to the primary receptor CD4. This interaction induces a structural rearrangement creating a high affinity binding site for a chemokine coreceptor like CXCR4 and/or CCR5. Acts as a ligand for CD209/DC-SIGN and CLEC4M/DC-SIGNR, which are respectively found on dendritic cells (DCs), and on endothelial cells of liver sinusoids and lymph node sinuses. These interactions allow capture of viral particles at mucosal surfaces by these cells and subsequent transmission to permissive cells. HIV subverts the migration properties of dendritic cells to gain access to CD4+ T-cells in lymph nodes. Virus transmission to permissive T-cells occurs either in trans (without DCs infection, through viral capture and transmission), or in cis (following DCs productive infection, through the usual CD4-gp120 interaction), thereby inducing a robust infection. In trans infection, bound virions remain infectious over days and it is proposed that they are not degraded, but protected in non-lysosomal acidic organelles within the DCs close to the cell membrane thus contributing to the viral infectious potential during DCs' migration from the periphery to the lymphoid tissues. On arrival at lymphoid tissues, intact virions recycle back to DCs' cell surface allowing virus transmission to CD4+ T-cells. Acts as a class I viral fusion protein. Under the current model, the protein has at least 3 conformational states: pre-fusion native state, pre-hairpin intermediate state, and post-fusion hairpin state. During fusion of viral and target intracellular membranes, the coiled coil regions (heptad repeats) assume a trimer-of-hairpins structure, positioning the fusion peptide in close proximity to the C-terminal region of the ectodomain. The formation of this structure appears to drive apposition and subsequent fusion of viral and target cell membranes. Complete fusion occurs in host cell endosomes and is dynamin-dependent, however some lipid transfer might occur at the plasma membrane. The virus undergoes clathrin-dependent internalization long before endosomal fusion, thus minimizing the surface exposure of conserved viral epitopes during fusion and reducing the efficacy of inhibitors targeting these epitopes. Membranes fusion leads to delivery of the nucleocapsid into the cytoplasm. The sequence is that of Envelope glycoprotein gp160 from Homo sapiens (Human).